The sequence spans 1393 residues: DNA-directed RNA polymerase subunit beta' (1393 aa).

Zn(2+) is bound by residues C72, C74, C87, and C90. Residues D463, D465, and D467 each contribute to the Mg(2+) site. Residues C812, C887, C894, and C897 each coordinate Zn(2+).

The protein belongs to the RNA polymerase beta' chain family. The RNAP catalytic core consists of 2 alpha, 1 beta, 1 beta' and 1 omega subunit. When a sigma factor is associated with the core the holoenzyme is formed, which can initiate transcription. Mg(2+) is required as a cofactor. The cofactor is Zn(2+).

The enzyme catalyses RNA(n) + a ribonucleoside 5'-triphosphate = RNA(n+1) + diphosphate. In terms of biological role, DNA-dependent RNA polymerase catalyzes the transcription of DNA into RNA using the four ribonucleoside triphosphates as substrates. The sequence is that of DNA-directed RNA polymerase subunit beta' from Chlamydia pneumoniae (Chlamydophila pneumoniae).